A 169-amino-acid chain; its full sequence is Lipoprotein signal peptidase (169 aa).

Transmembrane regions (helical) follow at residues 10-30 (LPWL…KAFF), 40-60 (IVVI…AAFS), 68-88 (WQRW…VVWL), and 94-114 (GETW…GNLY). Catalysis depends on residues Asp-124 and Asp-143. The helical transmembrane segment at 135 to 155 (YFPAFNLADSAITVGAVMLAL) threads the bilayer.

Belongs to the peptidase A8 family.

The protein resides in the cell inner membrane. It carries out the reaction Release of signal peptides from bacterial membrane prolipoproteins. Hydrolyzes -Xaa-Yaa-Zaa-|-(S,diacylglyceryl)Cys-, in which Xaa is hydrophobic (preferably Leu), and Yaa (Ala or Ser) and Zaa (Gly or Ala) have small, neutral side chains.. The protein operates within protein modification; lipoprotein biosynthesis (signal peptide cleavage). Its function is as follows. This protein specifically catalyzes the removal of signal peptides from prolipoproteins. This chain is Lipoprotein signal peptidase, found in Pseudomonas aeruginosa (strain UCBPP-PA14).